The sequence spans 320 residues: Lipoyl synthase (320 aa).

Residues C67, C72, C78, C93, C97, C100, and S307 each contribute to the [4Fe-4S] cluster site. The Radical SAM core domain maps to F79 to E296.

This sequence belongs to the radical SAM superfamily. Lipoyl synthase family. It depends on [4Fe-4S] cluster as a cofactor.

Its subcellular location is the cytoplasm. It carries out the reaction [[Fe-S] cluster scaffold protein carrying a second [4Fe-4S](2+) cluster] + N(6)-octanoyl-L-lysyl-[protein] + 2 oxidized [2Fe-2S]-[ferredoxin] + 2 S-adenosyl-L-methionine + 4 H(+) = [[Fe-S] cluster scaffold protein] + N(6)-[(R)-dihydrolipoyl]-L-lysyl-[protein] + 4 Fe(3+) + 2 hydrogen sulfide + 2 5'-deoxyadenosine + 2 L-methionine + 2 reduced [2Fe-2S]-[ferredoxin]. It functions in the pathway protein modification; protein lipoylation via endogenous pathway; protein N(6)-(lipoyl)lysine from octanoyl-[acyl-carrier-protein]: step 2/2. Its function is as follows. Catalyzes the radical-mediated insertion of two sulfur atoms into the C-6 and C-8 positions of the octanoyl moiety bound to the lipoyl domains of lipoate-dependent enzymes, thereby converting the octanoylated domains into lipoylated derivatives. This Glaesserella parasuis serovar 5 (strain SH0165) (Haemophilus parasuis) protein is Lipoyl synthase.